The following is a 641-amino-acid chain: ATP-dependent DNA helicase PIF1 (641 aa).

Positions 1–180 (MLSGIEAAAG…LVKRPVEPQA (180 aa)) are PINT. 2 positions are modified to phosphoserine: Ser27 and Ser151. The segment at 167-641 (PDTTLVKRPV…SDQENMDPIL (475 aa)) is hydrolyzes ATP in the presence of both magnesium and single-stranded DNA; weak activity in the presence of RNA or double-stranded DNA; No unwinding activity. The interval 173 to 192 (KRPVEPQAGAEPSTEAPRWP) is disordered. 228 to 235 (GSAGTGKS) lines the ATP pocket. A DNA-binding region spans residues 577–596 (QAYVALSRARSLQGLRVLDF). The interval 622 to 641 (LESPDDDEAASDQENMDPIL) is disordered. Acidic residues predominate over residues 624 to 641 (SPDDDEAASDQENMDPIL).

It belongs to the helicase family. PIF1 subfamily. Monomer. Interacts with telomerase. It depends on Mg(2+) as a cofactor. As to expression, weak ubiquitous expression.

The protein resides in the nucleus. It localises to the mitochondrion. The enzyme catalyses Couples ATP hydrolysis with the unwinding of duplex DNA at the replication fork by translocating in the 5'-3' direction. This creates two antiparallel DNA single strands (ssDNA). The leading ssDNA polymer is the template for DNA polymerase III holoenzyme which synthesizes a continuous strand.. It catalyses the reaction ATP + H2O = ADP + phosphate + H(+). In terms of biological role, DNA-dependent ATPase and 5'-3' DNA helicase required for the maintenance of both mitochondrial and nuclear genome stability. Efficiently unwinds G-quadruplex (G4) DNA structures and forked RNA-DNA hybrids. Resolves G4 structures, preventing replication pausing and double-strand breaks (DSBs) at G4 motifs. Involved in the maintenance of telomeric DNA. Inhibits telomere elongation, de novo telomere formation and telomere addition to DSBs via catalytic inhibition of telomerase. Reduces the processivity of telomerase by displacing active telomerase from DNA ends. Releases telomerase by unwinding the short telomerase RNA/telomeric DNA hybrid that is the intermediate in the telomerase reaction. Possesses an intrinsic strand annealing activity. In Homo sapiens (Human), this protein is ATP-dependent DNA helicase PIF1.